Consider the following 218-residue polypeptide: Sodium channel regulatory subunit beta-1 (218 aa).

The N-terminal stretch at 1–18 (MGRLLAFVVGAALVSSAW) is a signal peptide. Residues 19–157 (GGCVEVDSET…DKANRDMASI (139 aa)) are Extracellular-facing. 2 disulfide bridges follow: Cys21–Cys43 and Cys40–Cys121. The Ig-like C2-type domain occupies 22–150 (VEVDSETEAV…KIHLEVVDKA (129 aa)). N-linked (GlcNAc...) asparagine glycosylation is found at Asn93, Asn110, Asn114, and Asn135. A helical membrane pass occupies residues 158 to 179 (VSEIMMYVLIVVLTIWLVAEMV). Residues 180-218 (YCYKKIAAATEAAAQENASEYLAITSESKENCTGVQVAE) are Cytoplasmic-facing.

It belongs to the sodium channel auxiliary subunit SCN1B (TC 8.A.17) family. In terms of assembly, a voltage-gated sodium (Nav) channel consists of an ion-conducting pore-forming alpha subunit functional on its own that is regulated by one or more beta subunits. Interacts with SCN1A; regulatory subunit of SCN1A/Nav1.1. Interacts with SCN3A; regulatory subunit of SCN3A/Nav1.3. Interacts with SCN4A; regulatory subunit of SCN4A/Nav1.4. Interacts with SCN5A; regulatory subunit of SCN5A/Nav1.5. Interacts with SCN8A; regulatory subunit of SCN8A/Nav1.6. Interacts with SCN9A; regulatory subunit of SCN9A/Nav1.7. Interacts with SCN10A; regulatory subunit of SCN10A/Nav1.8. Interacts with NFASC. Interacts with TMEM65.

It localises to the cell membrane. It is found in the perikaryon. Its subcellular location is the cell projection. The protein resides in the axon. Functionally, regulatory subunit of multiple voltage-gated sodium (Nav) channels directly mediating the depolarization of excitable membranes. Navs, also called VGSCs (voltage-gated sodium channels) or VDSCs (voltage-dependent sodium channels), operate by switching between closed and open conformations depending on the voltage difference across the membrane. In the open conformation they allow Na(+) ions to selectively pass through the pore, along their electrochemical gradient. The influx of Na+ ions provokes membrane depolarization, initiating the propagation of electrical signals throughout cells and tissues. The accessory beta subunits participate in localization and functional modulation of the Nav channels. Modulates the activity of SCN1A/Nav1.1, SCN2A/Nav1.2, SCN3A/Nav1.3, SCN4A/Nav1.4, SCN5A/Nav1.5, SCN8A/Nav1.6, SCN9A/Nav1.7 and SCN10A/Nav1.8. The chain is Sodium channel regulatory subunit beta-1 from Oryctolagus cuniculus (Rabbit).